A 437-amino-acid polypeptide reads, in one-letter code: UDP-N-acetylmuramate--L-alanine ligase (437 aa).

ATP is bound at residue 108–114 (GAHGKTS).

This sequence belongs to the MurCDEF family.

It localises to the cytoplasm. The enzyme catalyses UDP-N-acetyl-alpha-D-muramate + L-alanine + ATP = UDP-N-acetyl-alpha-D-muramoyl-L-alanine + ADP + phosphate + H(+). It functions in the pathway cell wall biogenesis; peptidoglycan biosynthesis. Cell wall formation. The protein is UDP-N-acetylmuramate--L-alanine ligase of Staphylococcus aureus (strain MRSA252).